Here is a 402-residue protein sequence, read N- to C-terminus: B box and SPRY domain-containing protein (402 aa).

The tract at residues 1-20 is disordered; sequence MSAEGAEPGPGSGSGPGPGP. The B box-type zinc-finger motif lies at 17 to 65; sequence GPGPLCPEHGQALSWFCGSERRPVCAACAGLGGRCRGHRIRRAEERAEE. Residues 212–402 enclose the B30.2/SPRY domain; sequence PLLTQLWATA…VADQTISIVR (191 aa).

In terms of assembly, interacts with TRPV5 and TRPV6. Interacts with YWHAZ/14-3-3 protein zeta.

It localises to the cytoplasm. The protein localises to the membrane. May regulate epithelial calcium transport by inhibiting TRPV5 activity. This Homo sapiens (Human) protein is B box and SPRY domain-containing protein (BSPRY).